The following is a 536-amino-acid chain: Proto-oncogene tyrosine-protein kinase Src (536 aa).

A disordered region spans residues 1 to 53 (MGSNKSKPKDASQRRRSLEPAENVHGAGGGAFPASQTPSKPASADGHRGPSAA). Gly-2 carries N-myristoyl glycine lipidation. Basic and acidic residues predominate over residues 7–19 (KPKDASQRRRSLE). Ser-17 is subject to Phosphoserine. At Ser-75 the chain carries Phosphoserine; by CDK5. The 62-residue stretch at 84–145 (GGVTTFVALY…PSNYVAPSDS (62 aa)) folds into the SH3 domain. The region spanning 151–248 (WYFGKITRRE…GLCHRLTTVC (98 aa)) is the SH2 domain. Tyr-187 carries the phosphotyrosine modification. Positions 270 to 523 (LRLEVKLGQG…YLQAFLEDYF (254 aa)) constitute a Protein kinase domain. ATP is bound by residues 276–284 (LGQGCFGEV) and Lys-298. Asp-389 serves as the catalytic Proton acceptor. At Tyr-419 the chain carries Phosphotyrosine; by autocatalysis. Tyr-419 is modified (phosphotyrosine; by FAK2). Phosphotyrosine; by CSK is present on Tyr-530.

It belongs to the protein kinase superfamily. Tyr protein kinase family. SRC subfamily. In terms of assembly, part of a complex comprised of PTPRA, BCAR1, BCAR3 (via SH2 domain) and SRC; the formation of the complex is dependent on integrin mediated-tyrosine phosphorylation of PTPRA. Interacts with DDEF1/ASAP1; via the SH3 domain. Interacts with CCPG1. Identified in a complex containing FGFR4, NCAM1, CDH2, PLCG1, FRS2, SRC, SHC1, GAP43 and CTTN. Interacts with ERBB2, STAT1 and PNN. Interacts with DDR1, DDR2 and DAB2. Interacts with CDCP1, TGFB1I1 and TOM1L2. Interacts with the cytoplasmic domain of MUC1, phosphorylates it and increases binding of MUC1 with beta-catenin. Interacts with RALGPS1; via the SH3 domain. Interacts with CAV2 (tyrosine phosphorylated form). Interacts (via the SH3 domain and the protein kinase domain) with ARRB1; the interaction is independent of the phosphorylation state of SRC C-terminus. Interacts with ARRB1 and ARRB2. Interacts with SRCIN1. Interacts with NDFIP2 and more weakly with NDFIP1. Interacts with PIK3CA and/or PIK3C2B, PTK2/FAK1 and ESR1 (dimethylated on arginine). Interacts with FASLG. Interacts (via SH2 domain) with the 'Tyr-402' phosphorylated form of PTK2B/PYK2. Interacts (via SH2 domain) with FLT3 (tyrosine phosphorylated). Interacts with PDGFRA (tyrosine phosphorylated). Interacts with CSF1R. Interacts (via SH2 and SH3 domain) with TNK2. Interacts (via protein kinase domain) with the tyrosine phosphorylated form of RUNX3 (via runt domain). Interacts with TRAF3 (via RING-type zinc finger domain). Interacts with RIGI, MAVS and TBK1. Interacts (via SH2 domain) with RACK1; the interaction is enhanced by tyrosine phosphorylation of RACK1 and inhibits SRC activity. Interacts with EPHB1; activates the MAPK/ERK cascade to regulate cell migration. Interacts with FCAMR. Interacts (via SH2 domain) with the 'Tyr-9' phosphorylated form of PDPK1. Interacts with AMOTL2; this interaction regulates the translocation of phosphorylated SRC to peripheral cell-matrix adhesion sites. Interacts with TRAP1. Interacts with CBLC; the interaction is enhanced when SRC is phosphorylated at Tyr-419. Interacts with ARHGEF5. Interacts (via cytoplasmic domain) with CEACAM1 (via SH2 domain); this interaction is regulated by trans-homophilic cell adhesion. Interacts with MPP2. Interacts with PRR7. Interacts (via kinase domain and to a lesser extent the SH2 domain) directly with PDLIM4; this interaction results in PTPN13-mediated dephosphorylation of this protein leading to its inactivation. Interacts with P85 (PIK3R1 or PIK3R2). Interacts with HNRNPA2B1. Interacts with IL6ST/gp130. Interacts (via SH3 domain) with PELP1 in the presence of 17-beta-estradiol. Interacts with AMBRA1. As to quaternary structure, (Microbial infection) Interacts with HEV ORF3 protein; via the SH3 domain. (Microbial infection) Interacts (via SH2 domain) with HCV non-structural protein 5A (via N-terminus). Myristoylated at Gly-2, and this is essential for targeting to membranes. In terms of processing, dephosphorylated at Tyr-530 by PTPRJ. Phosphorylated on Tyr-530 by c-Src kinase (CSK). The phosphorylated form is termed pp60c-src. Dephosphorylated by PTPRJ at Tyr-419. Normally maintained in an inactive conformation with the SH2 domain engaged with Tyr-530, the SH3 domain engaged with the SH2-kinase linker, and Tyr-419 dephosphorylated. Dephosphorylation of Tyr-530 as a result of protein tyrosine phosphatase (PTP) action disrupts the intramolecular interaction between the SH2 domain and Tyr-530, Tyr-419 can then become autophosphorylated, resulting in SRC activation. Phosphorylation of Tyr-530 by CSK allows this interaction to reform, resulting in SRC inactivation. CDK5-mediated phosphorylation at Ser-75 targets SRC to ubiquitin-dependent degradation and thus leads to cytoskeletal reorganization. Phosphorylated by PTK2/FAK1; this enhances kinase activity. Phosphorylated by PTK2B/PYK2; this enhances kinase activity. Upon activation of IL6ST by IL6, Tyr-419 is phosphorylated and Tyr-530 dephosphorylated. Post-translationally, displays reduced levels of autophosphorylation at Tyr-419 compared to isoforms 2 and 3. Displays enhanced levels of autophosphorylation at Tyr-419 compared to isoform 1. In terms of processing, displays enhanced levels of autophosphorylation at Tyr-419 compared to isoform 1. Shows reduced phosphorylation at Tyr-527 compared to isoforms 1 and 2. Post-translationally, S-nitrosylation is important for activation of its kinase activity. Ubiquitinated in response to CDK5-mediated phosphorylation. Ubiquitination mediated by CBLC requires SRC autophosphorylation at Tyr-419 and may lead to lysosomal degradation. In terms of tissue distribution, expressed ubiquitously. Expressed in the skin (at protein level). Platelets, neurons and osteoclasts express 5-fold to 200-fold higher levels than most other tissues. Expressed in spleen and liver. As to expression, expressed in brain.

Its subcellular location is the cell membrane. It is found in the mitochondrion inner membrane. The protein resides in the nucleus. It localises to the cytoplasm. The protein localises to the cytoskeleton. Its subcellular location is the perinuclear region. It is found in the cell junction. The protein resides in the focal adhesion. It carries out the reaction L-tyrosyl-[protein] + ATP = O-phospho-L-tyrosyl-[protein] + ADP + H(+). Its activity is regulated as follows. Phosphorylation by CSK at Tyr-530 inhibits kinase activity. Inhibitory phosphorylation at Tyr-530 is enhanced by heme. Further phosphorylation by CDK1 partially reactivates CSK-inactivated SRC and facilitates complete reactivation by protein tyrosine phosphatase PTPRC. Integrin engagement stimulates kinase activity. Phosphorylation by PTK2/FAK1 enhances kinase activity. Butein and pseudosubstrate-based peptide inhibitors like CIYKYYF act as inhibitors. Phosphorylation at Tyr-419 increases kinase activity. In terms of biological role, non-receptor protein tyrosine kinase which is activated following engagement of many different classes of cellular receptors including immune response receptors, integrins and other adhesion receptors, receptor protein tyrosine kinases, G protein-coupled receptors as well as cytokine receptors. Participates in signaling pathways that control a diverse spectrum of biological activities including gene transcription, immune response, cell adhesion, cell cycle progression, apoptosis, migration, and transformation. Due to functional redundancy between members of the SRC kinase family, identification of the specific role of each SRC kinase is very difficult. SRC appears to be one of the primary kinases activated following engagement of receptors and plays a role in the activation of other protein tyrosine kinase (PTK) families. Receptor clustering or dimerization leads to recruitment of SRC to the receptor complexes where it phosphorylates the tyrosine residues within the receptor cytoplasmic domains. Plays an important role in the regulation of cytoskeletal organization through phosphorylation of specific substrates such as AFAP1. Phosphorylation of AFAP1 allows the SRC SH2 domain to bind AFAP1 and to localize to actin filaments. Cytoskeletal reorganization is also controlled through the phosphorylation of cortactin (CTTN). When cells adhere via focal adhesions to the extracellular matrix, signals are transmitted by integrins into the cell resulting in tyrosine phosphorylation of a number of focal adhesion proteins, including PTK2/FAK1 and paxillin (PXN). In addition to phosphorylating focal adhesion proteins, SRC is also active at the sites of cell-cell contact adherens junctions and phosphorylates substrates such as beta-catenin (CTNNB1), delta-catenin (CTNND1), and plakoglobin (JUP). Another type of cell-cell junction, the gap junction, is also a target for SRC, which phosphorylates connexin-43 (GJA1). SRC is implicated in regulation of pre-mRNA-processing and phosphorylates RNA-binding proteins such as KHDRBS1. Phosphorylates PKP3 at 'Tyr-195' in response to reactive oxygen species, which may cause the release of PKP3 from desmosome cell junctions into the cytoplasm. Also plays a role in PDGF-mediated tyrosine phosphorylation of both STAT1 and STAT3, leading to increased DNA binding activity of these transcription factors. Involved in the RAS pathway through phosphorylation of RASA1 and RASGRF1. Plays a role in EGF-mediated calcium-activated chloride channel activation. Required for epidermal growth factor receptor (EGFR) internalization through phosphorylation of clathrin heavy chain (CLTC and CLTCL1) at 'Tyr-1477'. Involved in beta-arrestin (ARRB1 and ARRB2) desensitization through phosphorylation and activation of GRK2, leading to beta-arrestin phosphorylation and internalization. Has a critical role in the stimulation of the CDK20/MAPK3 mitogen-activated protein kinase cascade by epidermal growth factor. Might be involved not only in mediating the transduction of mitogenic signals at the level of the plasma membrane but also in controlling progression through the cell cycle via interaction with regulatory proteins in the nucleus. Plays an important role in osteoclastic bone resorption in conjunction with PTK2B/PYK2. Both the formation of a SRC-PTK2B/PYK2 complex and SRC kinase activity are necessary for this function. Recruited to activated integrins by PTK2B/PYK2, thereby phosphorylating CBL, which in turn induces the activation and recruitment of phosphatidylinositol 3-kinase to the cell membrane in a signaling pathway that is critical for osteoclast function. Promotes energy production in osteoclasts by activating mitochondrial cytochrome C oxidase. Phosphorylates DDR2 on tyrosine residues, thereby promoting its subsequent autophosphorylation. Phosphorylates RUNX3 and COX2 on tyrosine residues, TNK2 on 'Tyr-284' and CBL on 'Tyr-731'. Enhances RIGI-elicited antiviral signaling. Phosphorylates PDPK1 at 'Tyr-9', 'Tyr-373' and 'Tyr-376'. Phosphorylates BCAR1 at 'Tyr-128'. Phosphorylates CBLC at multiple tyrosine residues, phosphorylation at 'Tyr-341' activates CBLC E3 activity. Phosphorylates synaptic vesicle protein synaptophysin (SYP). Involved in anchorage-independent cell growth. Required for podosome formation. Mediates IL6 signaling by activating YAP1-NOTCH pathway to induce inflammation-induced epithelial regeneration. Phosphorylates OTUB1, promoting deubiquitination of RPTOR. Phosphorylates caspase CASP8 at 'Tyr-380' which negatively regulates CASP8 processing and activation, down-regulating CASP8 proapoptotic function. Non-receptor protein tyrosine kinase which phosphorylates synaptophysin with high affinity. Its function is as follows. Non-receptor protein tyrosine kinase which shows higher basal kinase activity than isoform 1, possibly due to weakened intramolecular interactions which enhance autophosphorylation of Tyr-419 and subsequent activation. The SH3 domain shows reduced affinity with the linker sequence between the SH2 and kinase domains which may account for the increased basal activity. Displays altered substrate specificity compared to isoform 1, showing weak affinity for synaptophysin and for peptide substrates containing class I or class II SH3 domain-binding motifs. Plays a role in L1CAM-mediated neurite elongation, possibly by acting downstream of L1CAM to drive cytoskeletal rearrangements involved in neurite outgrowth. Functionally, non-receptor protein tyrosine kinase which shows higher basal kinase activity than isoform 1, possibly due to weakened intramolecular interactions which enhance autophosphorylation of Tyr-419 and subsequent activation. The SH3 domain shows reduced affinity with the linker sequence between the SH2 and kinase domains which may account for the increased basal activity. Displays altered substrate specificity compared to isoform 1, showing weak affinity for synaptophysin and for peptide substrates containing class I or class II SH3 domain-binding motifs. Plays a role in neurite elongation. The sequence is that of Proto-oncogene tyrosine-protein kinase Src from Homo sapiens (Human).